The sequence spans 400 residues: Serine/threonine transporter SstT (400 aa).

The next 9 membrane-spanning stretches (helical) occupy residues 14–34 (IIIAIILGIGVALLFPTVTPY), 48–68 (SVAPILVFVLVLSSIANFQVG), 76–96 (VLLLYVVGMLLAAFSAVIASL), 136–156 (AISEANFIGILAWAIGLGLAM), 177–197 (IIHKVIAFAPVGIFGLVAVTF), 211–231 (LLVVLLGTMLFVALVINPILV), 285–305 (IPLGATVNMAGAAVTITVLTL), 311–331 (LGIHVDLATMIILSVVATISA), and 349–371 (CSLFGISSEIAMQVVAVGMIISV).

This sequence belongs to the dicarboxylate/amino acid:cation symporter (DAACS) (TC 2.A.23) family.

Its subcellular location is the cell inner membrane. The enzyme catalyses L-serine(in) + Na(+)(in) = L-serine(out) + Na(+)(out). It carries out the reaction L-threonine(in) + Na(+)(in) = L-threonine(out) + Na(+)(out). Involved in the import of serine and threonine into the cell, with the concomitant import of sodium (symport system). The chain is Serine/threonine transporter SstT from Acinetobacter baumannii (strain AB307-0294).